We begin with the raw amino-acid sequence, 492 residues long: Cytochrome P450 monooxygenase ATEG_03631 (492 aa).

The chain crosses the membrane as a helical span at residues 10-30 (FATLNPMVVVAIPVFLFVISL). An N-linked (GlcNAc...) asparagine glycan is attached at asparagine 309. Cysteine 457 serves as a coordination point for heme.

Belongs to the cytochrome P450 family. It depends on heme as a cofactor.

The protein localises to the membrane. It participates in secondary metabolite biosynthesis. Cytochrome P450 monooxygenase; part of the cluster A that mediates the biosynthesis of azasperpyranones, members of the azaphilone family that exhibit anti-cancer activities. Azasperpyranones are synthesized by 2 clusters, A and B. Cluster A is responsible for the production of the polyhydric phenol moiety while the azaphilonoid scaffold is produced by the cluster B. The non-reducing polyketide synthase ATEG_03629 produces 5-methyl orsellinic acid, which is then reduced to 5-methyl orsellinic aldehyde by the NRPS-like protein ATEG_03630. 5-methyl orsellinic aldehyde is then first hydroxylated by the FAD-dependent monooxygenase ATEG_03635 and subsequently hydroxylated by the cytochrome P450 monooxygenase ATEG_03631 to produce the unstable polyhydric phenol precursor of azasperpyranones. On the other hand, the polyketide synthase ATEG_07659 is responsible for producing the 3,5-dimethyloctadienone moiety from acetyl-CoA, three malonyl-CoA, and two S-adenosyl methionines (SAM). The 3,5-dimethyloctadienone moiety is then loaded onto the SAT domain of ATEG_07661 and extended with four malonyl-CoA and one SAM, which leads to the formation of 2,4-dihydroxy-6-(5,7-dimethyl-2-oxo-trans-3-trans-5-nonadienyl)-3-methylbenzaldehyde (compound 8) after reductive release and aldol condensation. The FAD-dependent monooxygenase ATEG_07662 is the next enzyme in the biosynthesis sequence and hydroxylates the side chain at the benzylic position of compound 8. In Aspergillus nidulans, afoF, the ortholog of the FAD-dependent oxygenase ATEG_07660, is the key enzyme for the biosynthesis of asperfuranone by catalyzing the hydroxylation at C-8 of to prevent the formation of a six-membered ring hemiacetal intermediate and thus facilitating the formation of a five-membered ring to produce asperfuranone. In Aspergillus terreus, ATEG_07660 is probably not functional, which leads to the formation of the six-membered ring hemiacetal intermediate presperpyranone instead of asperfuranone. Finally, ATEG_03636 is involved in the condensation of the polyhydric phenol moiety produced by cluster A and the perasperpyranone precursor produced by cluster B, to yield azasperpyranone A. Further modifications of azasperpyranone A result in the production of derivatives, including azasperpyranone B to F. The chain is Cytochrome P450 monooxygenase ATEG_03631 from Aspergillus terreus (strain NIH 2624 / FGSC A1156).